The following is a 353-amino-acid chain: Phospho-N-acetylmuramoyl-pentapeptide-transferase (353 aa).

10 helical membrane passes run 24-44, 66-86, 88-108, 129-149, 160-180, 192-212, 229-249, 256-276, 281-301, and 330-350; these read LGFFIAFFLTLFLMPKFILWA, TPTMGGIVFVFATIVASVLCA, LGNLYVLLGLIVLVGFSFVGF, FGMLFILSLIVSVLLSLKGLD, PLFEMPTMLAVGFWVLVFLST, GLASVPSIFTLLSLSIFVYVA, VGELFVVSLALVGSLFGFLWY, VFMGDSGSLALGGFIAYNAIV, ILLVLMGSIFVIETLSVILQV, and KVIVRFWIISMLSNLVALLSL.

Belongs to the glycosyltransferase 4 family. MraY subfamily. Requires Mg(2+) as cofactor.

The protein resides in the cell inner membrane. It carries out the reaction UDP-N-acetyl-alpha-D-muramoyl-L-alanyl-gamma-D-glutamyl-meso-2,6-diaminopimeloyl-D-alanyl-D-alanine + di-trans,octa-cis-undecaprenyl phosphate = di-trans,octa-cis-undecaprenyl diphospho-N-acetyl-alpha-D-muramoyl-L-alanyl-D-glutamyl-meso-2,6-diaminopimeloyl-D-alanyl-D-alanine + UMP. The protein operates within cell wall biogenesis; peptidoglycan biosynthesis. Its function is as follows. Catalyzes the initial step of the lipid cycle reactions in the biosynthesis of the cell wall peptidoglycan: transfers peptidoglycan precursor phospho-MurNAc-pentapeptide from UDP-MurNAc-pentapeptide onto the lipid carrier undecaprenyl phosphate, yielding undecaprenyl-pyrophosphoryl-MurNAc-pentapeptide, known as lipid I. In Helicobacter pylori (strain ATCC 700392 / 26695) (Campylobacter pylori), this protein is Phospho-N-acetylmuramoyl-pentapeptide-transferase.